The following is a 329-amino-acid chain: D-alanine--D-alanine ligase (329 aa).

In terms of domain architecture, ATP-grasp spans 120-326 (KLWYDAIGIP…FHEFLADCIN (207 aa)). Residue 150–205 (AFDKWGKVFVKAARQGSSVGCYSVTNKQSVSQAVNDAFGYSEQVLVEKSVKPRELE) participates in ATP binding. Asp-280, Glu-293, and Asn-295 together coordinate Mg(2+).

This sequence belongs to the D-alanine--D-alanine ligase family. The cofactor is Mg(2+). It depends on Mn(2+) as a cofactor.

It is found in the cytoplasm. It catalyses the reaction 2 D-alanine + ATP = D-alanyl-D-alanine + ADP + phosphate + H(+). It functions in the pathway cell wall biogenesis; peptidoglycan biosynthesis. Functionally, cell wall formation. The chain is D-alanine--D-alanine ligase from Vibrio campbellii (strain ATCC BAA-1116).